Reading from the N-terminus, the 198-residue chain is Single-stranded DNA cytosine deaminase (198 aa).

Residues Met1 to Cys30 carry the Bipartite nuclear localization signal motif. The interval Asp2–Glu26 is interaction with SUPT6H. The region spanning Gly23–Leu129 is the CMP/dCMP-type deaminase domain. Thr27 bears the Phosphothreonine; by PKA mark. The residue at position 38 (Ser38) is a Phosphoserine; by PKA. Residues Ala39–Phe42 are important for interaction with CTNNBL1. His56 is a Zn(2+) binding site. The Proton donor role is filled by Glu58. Zn(2+) contacts are provided by Cys87 and Cys90. The interval Tyr88 to Cys116 is required for interaction with RNF126. Positions Leu183–Leu198 match the Nuclear export signal motif.

It belongs to the cytidine and deoxycytidylate deaminase family. In terms of assembly, interacts with CTNNBL1; the interaction is important for the immunoglobulin switch activity of AICDA. Interacts (via its NLS) with KPNA1. Interacts with PKA/PRKACA and PRKAR1A/PKR1. Interacts with SUPT6H, TRIM28 and NCL. Directly interacts with MCM3AP; this interaction may favor AICDA recruitment to immunoglobulin variable region genes, hence promoting somatic hypermutations. Zn(2+) serves as cofactor. Ser-38 is the major site whereas Thr-27 is the minor site of phosphorylation. Phosphorylation regulates its class-switch recombination activity. Post-translationally, probably monoubiquitinated on several residues by RNF126. As to expression, expressed in thymus, lung, spleen, kidney, small intestine, lymph node and tonsil.

The protein localises to the nucleus. Its subcellular location is the cytoplasm. It carries out the reaction a 2'-deoxycytidine in single-stranded DNA + H2O + H(+) = a 2'-deoxyuridine in single-stranded DNA + NH4(+). Functionally, single-stranded DNA-specific cytidine deaminase. Involved in somatic hypermutation (SHM), gene conversion, and class-switch recombination (CSR) in B-lymphocytes by deaminating C to U during transcription of Ig-variable (V) and Ig-switch (S) region DNA. Required for several crucial steps of B-cell terminal differentiation necessary for efficient antibody responses. May also play a role in the epigenetic regulation of gene expression by participating in DNA demethylation. This Canis lupus familiaris (Dog) protein is Single-stranded DNA cytosine deaminase (AICDA).